A 200-amino-acid chain; its full sequence is MSCMPVSTKCNDIWVDFSCTGPSISELQKKEPKAWAAIVRSRTNQQTAEDDNIIGSICDKQGLCSKDEYAYSQYCACVNSGTLWAECAFAPCNGNKNAYKTTEQRNILTNKQCPSGLTICQNIAEYGGSGNISDLYQNFNCNSVINTFLINVMNHPFLTLILIILILIIIYRLMSSSSGGKHNDDKLPPPSLIFSNLNNF.

The N-linked (GlcNAc...) asparagine; by host glycan is linked to asparagine 131. The helical transmembrane segment at 150–170 (INVMNHPFLTLILIILILIII) threads the bilayer.

The protein belongs to the asfivirus E199L family. As to quaternary structure, interacts with host PYCR2; this interaction results in autophagy activation. Contains intramolecular disulfide bonds.

The protein resides in the virion membrane. The protein localises to the host membrane. Its function is as follows. Essential for viral fusion with host endosomal membrane and core release. Not required for virus morphogenesis and egress. Induces complete autophagy through the interaction with and down-regulation of host PYCR2. This is Inner membrane protein E199L from Ornithodoros (relapsing fever ticks).